The chain runs to 619 residues: 4-hydroxyphenylalkanoate adenylyltransferase (619 aa).

This sequence belongs to the ATP-dependent AMP-binding enzyme family.

The enzyme catalyses 17-(4-hydroxyphenyl)heptadecanoate + holo-[(phenol)carboxyphthiodiolenone synthase] + ATP = 17-(4-hydroxyphenyl)heptadecanoyl-[(phenol)carboxyphthiodiolenone synthase] + AMP + diphosphate. It catalyses the reaction 19-(4-hydroxyphenyl)nonadecanoate + holo-[(phenol)carboxyphthiodiolenone synthase] + ATP = 19-(4-hydroxyphenyl)nonadecanoyl-[(phenol)carboxyphthiodiolenone synthase] + AMP + diphosphate. The catalysed reaction is dodecanoate + ATP + H(+) = dodecanoyl-AMP + diphosphate. It participates in lipid metabolism; fatty acid biosynthesis. Functionally, catalyzes the activation of long-chain fatty acids as acyl-adenylates (acyl-AMP), which are then transferred to the multifunctional polyketide synthase PpsA for further chain extension. Involved in the biosynthesis of phenolphthiocerol, which is an important intermediate in the biosynthesis of phenolic glycolipid (PGL), also called mycosid B. This chain is 4-hydroxyphenylalkanoate adenylyltransferase (fadD29), found in Mycobacterium tuberculosis (strain ATCC 25618 / H37Rv).